Here is a 134-residue protein sequence, read N- to C-terminus: Cytochrome b5 (134 aa).

A2 is modified (N-acetylalanine). 3 positions are modified to N6-acetyllysine: K7, K10, and K19. Positions 9–85 (VKYYTLEEIK…SKTFIIGELH (77 aa)) constitute a Cytochrome b5 heme-binding domain. Heme-binding residues include H44 and H68. The helical transmembrane segment at 109-131 (WWTNWVIPAISALIVALMYRLYM) threads the bilayer.

Belongs to the cytochrome b5 family.

Its subcellular location is the endoplasmic reticulum membrane. The protein localises to the microsome membrane. Its function is as follows. Cytochrome b5 is a membrane-bound hemoprotein functioning as an electron carrier for several membrane-bound oxygenases. The protein is Cytochrome b5 (CYB5A) of Oryctolagus cuniculus (Rabbit).